The primary structure comprises 231 residues: F-box protein SKIP8 (231 aa).

Positions M1–T24 are disordered. An F-box domain is found at V34–L80.

In terms of assembly, part of a SCF (ASK-cullin-F-box) protein ligase complex. Interacts with SKP1A/ASK1.

Its pathway is protein modification; protein ubiquitination. In terms of biological role, component of SCF(ASK-cullin-F-box) E3 ubiquitin ligase complexes, which may mediate the ubiquitination and subsequent proteasomal degradation of target proteins. In Arabidopsis thaliana (Mouse-ear cress), this protein is F-box protein SKIP8 (SKIP8).